A 307-amino-acid polypeptide reads, in one-letter code: Malate dehydrogenase (307 aa).

Residues 8-13 (GAGNVG) and aspartate 32 each bind NAD(+). Arginine 81 and arginine 87 together coordinate substrate. NAD(+) is bound by residues asparagine 94 and 117–119 (VSN). 2 residues coordinate substrate: asparagine 119 and arginine 150. Histidine 174 acts as the Proton acceptor in catalysis.

The protein belongs to the LDH/MDH superfamily. MDH type 3 family.

It catalyses the reaction (S)-malate + NAD(+) = oxaloacetate + NADH + H(+). In terms of biological role, catalyzes the reversible oxidation of malate to oxaloacetate. The chain is Malate dehydrogenase from Dehalococcoides mccartyi (strain CBDB1).